Here is a 420-residue protein sequence, read N- to C-terminus: Arginine biosynthesis bifunctional protein ArgJ (420 aa).

The substrate site is built by Thr-167, Lys-193, Thr-204, Glu-284, Asn-415, and Thr-420. The active-site Nucleophile is the Thr-204.

The protein belongs to the ArgJ family. As to quaternary structure, heterotetramer of two alpha and two beta chains.

The protein localises to the cytoplasm. The enzyme catalyses N(2)-acetyl-L-ornithine + L-glutamate = N-acetyl-L-glutamate + L-ornithine. The catalysed reaction is L-glutamate + acetyl-CoA = N-acetyl-L-glutamate + CoA + H(+). Its pathway is amino-acid biosynthesis; L-arginine biosynthesis; L-ornithine and N-acetyl-L-glutamate from L-glutamate and N(2)-acetyl-L-ornithine (cyclic): step 1/1. The protein operates within amino-acid biosynthesis; L-arginine biosynthesis; N(2)-acetyl-L-ornithine from L-glutamate: step 1/4. Functionally, catalyzes two activities which are involved in the cyclic version of arginine biosynthesis: the synthesis of N-acetylglutamate from glutamate and acetyl-CoA as the acetyl donor, and of ornithine by transacetylation between N(2)-acetylornithine and glutamate. The polypeptide is Arginine biosynthesis bifunctional protein ArgJ (Prochlorococcus marinus (strain NATL2A)).